The sequence spans 122 residues: MIQMQTELQVADNSGAKRVECIKVLGGSHRRYASVGDVIKVTVKEAAPRGKAKKGSVYNAVVVRTAKGVRRKDGSKVRFDDNAAVLLNNNGQPIGTRIFGPVTRELRTEKFMKIVSLAPEVL.

It belongs to the universal ribosomal protein uL14 family. Part of the 50S ribosomal subunit. Forms a cluster with proteins L3 and L19. In the 70S ribosome, L14 and L19 interact and together make contacts with the 16S rRNA in bridges B5 and B8.

Its function is as follows. Binds to 23S rRNA. Forms part of two intersubunit bridges in the 70S ribosome. The chain is Large ribosomal subunit protein uL14 from Francisella philomiragia subsp. philomiragia (strain ATCC 25017 / CCUG 19701 / FSC 153 / O#319-036).